We begin with the raw amino-acid sequence, 241 residues long: ATP synthase subunit a (241 aa).

The next 5 membrane-spanning stretches (helical) occupy residues 30–50 (GQIFLSSWILIGALLAFVLVG), 89–109 (LPFIGTLFLFIFVSNWGGALI), 128–148 (INTTVAMALLVTLAYFYAGLS), 193–213 (LAVGVLVYLVPLIVPLPVMLL), and 214–234 (GLFTSAIQALIFATLAAFYIG).

The protein belongs to the ATPase A chain family. F-type ATPases have 2 components, CF(1) - the catalytic core - and CF(0) - the membrane proton channel. CF(1) has five subunits: alpha(3), beta(3), gamma(1), delta(1), epsilon(1). CF(0) has four main subunits: a, b, b' and c.

It is found in the cellular thylakoid membrane. In terms of biological role, key component of the proton channel; it plays a direct role in the translocation of protons across the membrane. In Synechococcus sp. (strain CC9311), this protein is ATP synthase subunit a.